The following is a 2904-amino-acid chain: Protein eyes shut homolog (2904 aa).

The first 23 residues, 1 to 23, serve as a signal peptide directing secretion; sequence MRNPKLAIIVFLLSCVIYGPVYS. N-linked (GlcNAc...) asparagine glycans are attached at residues Asn-41 and Asn-135. EGF-like domains are found at residues 174-216, 217-259, 263-298, and 300-336; these read KPQL…RYCE, NVDG…VNCS, GNQN…TYCE, and KRLF…LNCE. 6 disulfides stabilise this stretch: Cys-178-Cys-193, Cys-187-Cys-204, Cys-206-Cys-215, Cys-221-Cys-232, Cys-226-Cys-247, and Cys-249-Cys-258. Residues Asn-257 and Asn-266 are each glycosylated (N-linked (GlcNAc...) asparagine). Intrachain disulfides connect Cys-267–Cys-276, Cys-271–Cys-286, Cys-288–Cys-297, Cys-304–Cys-315, Cys-309–Cys-324, and Cys-326–Cys-335. Asn-362 carries N-linked (GlcNAc...) asparagine glycosylation. 3 EGF-like domains span residues 375–411, 413–451, and 453–496; these read QAEV…KNCE, IIDF…EFCQ, and LENA…PYCE. Intrachain disulfides connect Cys-379–Cys-390, Cys-384–Cys-399, Cys-401–Cys-410, Cys-417–Cys-430, Cys-424–Cys-439, Cys-441–Cys-450, Cys-457–Cys-470, Cys-464–Cys-484, Cys-486–Cys-495, Cys-502–Cys-513, Cys-507–Cys-522, and Cys-524–Cys-533. The region spanning 498-534 is the EGF-like 8; calcium-binding domain; it reads EVNECDSSPCQHQGTCTDFVGYYKCTCPSGYTGIDCE. N-linked (GlcNAc...) asparagine glycosylation is present at Asn-544. The EGF-like 9 domain occupies 565 to 603; sequence HTPCPHYLQPCANGGHCVLHNITSYSCVCAPGWTGATCL. Intrachain disulfides connect Cys-568/Cys-581, Cys-575/Cys-591, Cys-593/Cys-602, Cys-609/Cys-620, Cys-614/Cys-629, Cys-631/Cys-640, Cys-645/Cys-656, Cys-650/Cys-665, Cys-667/Cys-676, Cys-683/Cys-694, Cys-688/Cys-703, Cys-705/Cys-714, Cys-721/Cys-732, Cys-726/Cys-741, Cys-743/Cys-752, Cys-759/Cys-772, Cys-764/Cys-781, Cys-783/Cys-792, Cys-799/Cys-810, Cys-804/Cys-819, Cys-821/Cys-830, Cys-837/Cys-848, Cys-842/Cys-857, Cys-859/Cys-868, Cys-875/Cys-886, Cys-880/Cys-895, Cys-897/Cys-906, Cys-913/Cys-924, Cys-918/Cys-933, Cys-935/Cys-944, Cys-951/Cys-962, Cys-956/Cys-971, Cys-973/Cys-982, Cys-987/Cys-999, Cys-993/Cys-1014, Cys-1016/Cys-1025, Cys-1032/Cys-1042, Cys-1037/Cys-1051, Cys-1053/Cys-1062, Cys-1069/Cys-1080, Cys-1074/Cys-1089, Cys-1091/Cys-1100, Cys-1107/Cys-1118, Cys-1112/Cys-1127, Cys-1129/Cys-1138, Cys-1145/Cys-1156, Cys-1150/Cys-1167, Cys-1169/Cys-1178, Cys-1185/Cys-1198, Cys-1192/Cys-1208, Cys-1210/Cys-1219, Cys-1226/Cys-1237, Cys-1231/Cys-1246, Cys-1248/Cys-1257, Cys-1264/Cys-1275, Cys-1269/Cys-1284, Cys-1286/Cys-1295, Cys-1302/Cys-1313, Cys-1307/Cys-1322, Cys-1324/Cys-1333, Cys-1340/Cys-1351, Cys-1345/Cys-1360, Cys-1362/Cys-1371, Cys-1378/Cys-1388, Cys-1383/Cys-1397, Cys-1399/Cys-1408, Cys-1415/Cys-1426, Cys-1420/Cys-1435, Cys-1437/Cys-1446, Cys-1453/Cys-1469, Cys-1463/Cys-1479, Cys-1481/Cys-1490, Cys-1497/Cys-1508, Cys-1502/Cys-1517, Cys-1519/Cys-1528, Cys-1535/Cys-1545, Cys-1540/Cys-1556, and Cys-1558/Cys-1567. A glycan (N-linked (GlcNAc...) asparagine) is linked at Asn-585. The region spanning 605-641 is the EGF-like 10; calcium-binding domain; that stretch reads NINECVQHRCQNRATCVDEVGGYSCLCGHGYTGVHCE. One can recognise an EGF-like 11 domain in the interval 642-677; sequence LDFCSGHQCSEHAVCVDQQHNYTCRCMLGYEGTLCE. An N-linked (GlcNAc...) asparagine glycan is attached at Asn-662. The 37-residue stretch at 679-715 folds into the EGF-like 12; calcium-binding domain; it reads ETDECKSAPCTNNATCIDLVAGYQCLCAPGFKGRTCS. Residue Asn-691 is glycosylated (N-linked (GlcNAc...) asparagine). EGF-like domains lie at 717–753, 755–793, and 795–831; these read SMNE…HDCS, PATG…LFCE, and SINH…RLCE. The EGF-like 16; calcium-binding domain occupies 833–869; it reads NIDDCLDKPCGALSICKDGINAYDCFCAPGFVGNNCE. The EGF-like 17; calcium-binding domain occupies 871 to 907; that stretch reads EVNECLSQPCQNGASCSDELNSFSCLCLAGTTGSLCE. Residues 909–945 form the EGF-like 18; calcium-binding domain; it reads NIDECQSSPCMNNGTCLDLSDGFKCICPSGFSGPECS. Asn-921 carries an N-linked (GlcNAc...) asparagine glycan. The EGF-like 19; calcium-binding domain maps to 947 to 983; the sequence is DINECVSYPCKNGGSCIDQPGNYYCRCLAPFKGLNCE. One can recognise an EGF-like 20 domain in the interval 984–1026; it reads LLPCEAVNPCDNGAECVEEADLVLFPLGFQCRCRKGFTGPRCE. An EGF-like 21; calcium-binding domain is found at 1028–1063; that stretch reads NIDECSSNPCLNGFCYDAVDGFYCLCNPGYAGVRCE. Residues 1065-1101 form the EGF-like 22 domain; the sequence is HINDCASNMCENNSTCVDLHLSYNCLCLPGWEGEYCQ. Asn-1077 is a glycosylation site (N-linked (GlcNAc...) asparagine). One can recognise an EGF-like 23; calcium-binding domain in the interval 1103 to 1139; sequence ETNECLSNPCKNNATCTDLLNAYRCVCPQGWTGLDCD. Asn-1115 carries N-linked (GlcNAc...) asparagine glycosylation. EGF-like domains are found at residues 1141–1179 and 1181–1220; these read DVKE…PLCE and PYDP…TRCE. An N-linked (GlcNAc...) asparagine glycan is attached at Asn-1195. One can recognise an EGF-like 26; calcium-binding domain in the interval 1222–1258; it reads DSDDCVSRPCQNRGICVDGVNSYSCFCEPGFSGLHCE. The 37-residue stretch at 1260–1296 folds into the EGF-like 27; calcium-binding domain; sequence DINECASNPCQNQAVCQDLVNGFQCSCVPGYFGPHCN. Residues 1298-1334 form the EGF-like 28; calcium-binding domain; that stretch reads DVNECDSSPCLHESVCINKPGGFACVCSAGFSGKWCE. An EGF-like 29; calcium-binding domain is found at 1336 to 1372; the sequence is NVDECKSNPCRNNGSCIDGLNGYQCVCSRGFMGDHCE. The N-linked (GlcNAc...) asparagine glycan is linked to Asn-1348. The EGF-like 30; calcium-binding domain occupies 1374 to 1409; that stretch reads NTDECSSGPCVHGSCLDEIDAFSCQCEVGWTGHRCQ. The 37-residue stretch at 1411–1447 folds into the EGF-like 31; calcium-binding domain; sequence NINECEAHPCLNGGSCVDLLDKYACICADGFTGKNCD. The region spanning 1449–1491 is the EGF-like 32 domain; it reads DQNVCLQTSLNFSLCFNGGTCVDGPGVNFTCSCRPGFMGDFCE. N-linked (GlcNAc...) asparagine glycans are attached at residues Asn-1459 and Asn-1476. In terms of domain architecture, EGF-like 33; calcium-binding spans 1493 to 1529; sequence EMNECCSEPCFNGAICQDLINGYQCHCRPGWTGLHCE. The 38-residue stretch at 1531-1568 folds into the EGF-like 34 domain; sequence DINECLLQPCNQGMCIQNEPGHGYTCFCRPGFVGENCE. N-linked (GlcNAc...) asparagine glycosylation is found at Asn-1591, Asn-1755, and Asn-1788. The 179-residue stretch at 1640–1818 folds into the Laminin G-like 1 domain; the sequence is ASFGGYSGNS…AIARNNVDNC (179 aa). Disulfide bonds link Cys-1792–Cys-1818, Cys-1860–Cys-1871, Cys-1865–Cys-1885, and Cys-1887–Cys-1896. In terms of domain architecture, EGF-like 35 spans 1856 to 1897; that stretch reads PAPVCPQGICLNGGTCRPVSLPSGASSFFCDCPLHFTGRLCE. The Laminin G-like 2 domain maps to 1902–2102; it reads VFSPRFDGNS…NIQNCDAAVC (201 aa). Residues Asn-2025 and Asn-2064 are each glycosylated (N-linked (GlcNAc...) asparagine). 7 disulfide bridges follow: Cys-2071–Cys-2102, Cys-2102–Cys-2113, Cys-2107–Cys-2122, Cys-2124–Cys-2133, Cys-2138–Cys-2149, Cys-2143–Cys-2159, and Cys-2161–Cys-2170. EGF-like domains are found at residues 2098-2134 and 2135-2171; these read DAAV…KLCQ and FTAC…LLCD. Residues Asn-2175 and Asn-2216 are each glycosylated (N-linked (GlcNAc...) asparagine). The 191-residue stretch at 2182–2372 folds into the Laminin G-like 3 domain; that stretch reads SGLDEFGYSS…PLSGRNVGQC (191 aa). Intrachain disulfides connect Cys-2339–Cys-2372, Cys-2377–Cys-2388, Cys-2382–Cys-2397, Cys-2399–Cys-2408, Cys-2415–Cys-2431, Cys-2425–Cys-2440, and Cys-2442–Cys-2451. 2 EGF-like domains span residues 2373-2409 and 2411-2452; these read GVNP…ALCS and KVSF…LHCQ. One can recognise a Laminin G-like 4 domain in the interval 2459–2642; it reads DPFFSGNQSS…NVGDWDGTAC (184 aa). N-linked (GlcNAc...) asparagine glycans are attached at residues Asn-2465, Asn-2528, and Asn-2570. EGF-like domains lie at 2638–2675 and 2676–2714; these read DGTA…SRCQ and QSIQ…THCD. Cystine bridges form between Cys-2642–Cys-2653, Cys-2647–Cys-2663, Cys-2665–Cys-2674, Cys-2680–Cys-2691, Cys-2685–Cys-2702, and Cys-2704–Cys-2713. Asn-2694 carries an N-linked (GlcNAc...) asparagine glycan. The Laminin G-like 5 domain maps to 2719 to 2894; sequence LKTIRFIGNS…TKQLQFLQTC (176 aa). N-linked (GlcNAc...) asparagine glycans are attached at residues Asn-2750 and Asn-2816.

Belongs to the EYS family. As to expression, expressed in retina where it localizes between the retinal pigment epithelium and the outer nuclear layer (at protein level).

It localises to the cell projection. It is found in the cilium. Its subcellular location is the cytoplasm. The protein resides in the cytoskeleton. The protein localises to the cilium axoneme. It localises to the secreted. It is found in the extracellular space. Its subcellular location is the extracellular matrix. The protein resides in the interphotoreceptor matrix. Required to maintain the integrity of photoreceptor cells. Specifically required for normal morphology of the photoreceptor ciliary pocket, and might thus facilitate protein trafficking between the photoreceptor inner and outer segments via the transition zone. The polypeptide is Protein eyes shut homolog (Danio rerio (Zebrafish)).